The primary structure comprises 561 residues: Embryonal Fyn-associated substrate (561 aa).

Positions 5 to 68 (TSTQLARALY…PANRVKLLPA (64 aa)) constitute an SH3 domain. Disordered regions lie at residues 68–123 (AGPA…CPPS), 171–215 (HPLT…PGPP), 240–372 (LADG…HNEY), and 390–422 (DKAQ…ALSP). Residues 103–123 (VPPPARPCPTSGPPAGPCPPS) show a composition bias toward pro residues. A Phosphotyrosine; by SRC modification is found at Y253. 2 short sequence motifs (SH3-binding) span residues 305 to 311 (RPLPALP) and 335 to 341 (RPLPPPP). The span at 308–325 (PALPVPEAPSPSPVPSPA) shows a compositional bias: pro residues. The span at 352 to 372 (VEGDPEGREMEDDPAGHHNEY) shows a compositional bias: basic and acidic residues. Positions 438-488 (FYAGQCQSHYSALQAAVAALMSSTQANQPPRLFVPHSKRVVVAAHRLVFVG) are divergent helix-loop-helix motif.

The protein belongs to the CAS family. Phosphorylated on multiple tyrosine residues. Phosphorylated on tyrosines by FYN and SRC. The protein has been detected in lung and placenta.

Functionally, docking protein which plays a central coordinating role for tyrosine-kinase-based signaling related to cell adhesion. May serve as an activator of SRC and a downstream effector. Interacts with the SH3 domain of FYN and with CRK, SRC, and YES. This chain is Embryonal Fyn-associated substrate (EFS), found in Homo sapiens (Human).